The primary structure comprises 150 residues: Ribonuclease H (150 aa).

The region spanning 7–148 (ESNIVEIWTD…ADQLATKARM (142 aa)) is the RNase H type-1 domain. Mg(2+)-binding residues include D16, E54, D76, and D140.

The protein belongs to the RNase H family. In terms of assembly, monomer. Requires Mg(2+) as cofactor.

It is found in the cytoplasm. The enzyme catalyses Endonucleolytic cleavage to 5'-phosphomonoester.. Its function is as follows. Endonuclease that specifically degrades the RNA of RNA-DNA hybrids. In Granulibacter bethesdensis (strain ATCC BAA-1260 / CGDNIH1), this protein is Ribonuclease H.